The following is a 175-amino-acid chain: Crossover junction endodeoxyribonuclease RuvC (175 aa).

Residues Asp8, Glu67, and Asp139 contribute to the active site. Asp8, Glu67, and Asp139 together coordinate Mg(2+).

Belongs to the RuvC family. In terms of assembly, homodimer which binds Holliday junction (HJ) DNA. The HJ becomes 2-fold symmetrical on binding to RuvC with unstacked arms; it has a different conformation from HJ DNA in complex with RuvA. In the full resolvosome a probable DNA-RuvA(4)-RuvB(12)-RuvC(2) complex forms which resolves the HJ. Mg(2+) is required as a cofactor.

It localises to the cytoplasm. The enzyme catalyses Endonucleolytic cleavage at a junction such as a reciprocal single-stranded crossover between two homologous DNA duplexes (Holliday junction).. The RuvA-RuvB-RuvC complex processes Holliday junction (HJ) DNA during genetic recombination and DNA repair. Endonuclease that resolves HJ intermediates. Cleaves cruciform DNA by making single-stranded nicks across the HJ at symmetrical positions within the homologous arms, yielding a 5'-phosphate and a 3'-hydroxyl group; requires a central core of homology in the junction. The consensus cleavage sequence is 5'-(A/T)TT(C/G)-3'. Cleavage occurs on the 3'-side of the TT dinucleotide at the point of strand exchange. HJ branch migration catalyzed by RuvA-RuvB allows RuvC to scan DNA until it finds its consensus sequence, where it cleaves and resolves the cruciform DNA. The chain is Crossover junction endodeoxyribonuclease RuvC from Marinobacter nauticus (strain ATCC 700491 / DSM 11845 / VT8) (Marinobacter aquaeolei).